The following is a 765-amino-acid chain: Eukaryotic translation initiation factor 3 subunit B (765 aa).

The interval 1–136 is sufficient for interaction with HCR1 and TIF32; it reads MKNFLPRTLK…LFVECGSMND (136 aa). Residues 28 to 261 form a sufficient for interaction with PIC8 region; the sequence is RNTQLKRSKI…GVTAWGGPNF (234 aa). At S61 the chain carries Phosphoserine. Y67 is modified (phosphotyrosine). One can recognise an RRM domain in the interval 77-162; sequence QYIVVNGAPV…HRLFLYTMKD (86 aa). S671 bears the Phosphoserine mark.

The protein belongs to the eIF-3 subunit B family. As to quaternary structure, component of the eukaryotic translation initiation factor 3 (eIF-3) complex.

The protein localises to the cytoplasm. Its function is as follows. RNA-binding component of the eukaryotic translation initiation factor 3 (eIF-3) complex, which is involved in protein synthesis of a specialized repertoire of mRNAs and, together with other initiation factors, stimulates binding of mRNA and methionyl-tRNAi to the 40S ribosome. The eIF-3 complex specifically targets and initiates translation of a subset of mRNAs involved in cell proliferation. This chain is Eukaryotic translation initiation factor 3 subunit B, found in Saccharomyces cerevisiae (strain YJM789) (Baker's yeast).